Consider the following 148-residue polypeptide: Deoxyuridine 5'-triphosphate nucleotidohydrolase (148 aa).

Substrate is bound by residues 65–67 (RSG), Asn78, 82–84 (TID), and Lys92.

Belongs to the dUTPase family. Requires Mg(2+) as cofactor.

It carries out the reaction dUTP + H2O = dUMP + diphosphate + H(+). Its pathway is pyrimidine metabolism; dUMP biosynthesis; dUMP from dCTP (dUTP route): step 2/2. In terms of biological role, this enzyme is involved in nucleotide metabolism: it produces dUMP, the immediate precursor of thymidine nucleotides and it decreases the intracellular concentration of dUTP so that uracil cannot be incorporated into DNA. In Chlorobium luteolum (strain DSM 273 / BCRC 81028 / 2530) (Pelodictyon luteolum), this protein is Deoxyuridine 5'-triphosphate nucleotidohydrolase.